A 366-amino-acid polypeptide reads, in one-letter code: G kinase-anchoring protein 1 (366 aa).

The interval 1-95 (MASAVLSSVP…SHAVCNAQHD (95 aa)) is interaction with IRS1. Disordered stretches follow at residues 20 to 110 (QVDS…REEN) and 147 to 177 (EYEDAENTSTQSKVMNKKDKRKNHQGKDRPL). Residues Ser-23, Ser-25, and Ser-27 each carry the phosphoserine modification. Residues 39–50 (TGKSQTLGSKST) are compositionally biased toward polar residues. The stretch at 47–77 (SKSTTNEKKREKRRKKKEQQQSEANELRNLA) forms a coiled coil. Residue Ser-106 is modified to Phosphoserine; by PKG. Coiled-coil stretches lie at residues 128–160 (ADLEKALLLSKLEYEEHKKEYEDAENTSTQSKV) and 243–353 (EHNQ…YQGG).

It belongs to the GKAP1 family. In terms of assembly, interacts with PRKG1 and IRS1.

The protein resides in the golgi apparatus. Regulates insulin-dependent IRS1 tyrosine phosphorylation in adipocytes by modulating the availability of IRS1 to IR tyrosine kinase. Its association with IRS1 is required for insulin-induced translocation of SLC2A4 to the cell membrane. Involved in TNF-induced impairment of insulin-dependent IRS1 tyrosine phosphorylation. In Homo sapiens (Human), this protein is G kinase-anchoring protein 1 (GKAP1).